We begin with the raw amino-acid sequence, 504 residues long: ATP synthase subunit alpha 2 (504 aa).

169–176 (GDRQTGKT) lines the ATP pocket.

It belongs to the ATPase alpha/beta chains family. F-type ATPases have 2 components, CF(1) - the catalytic core - and CF(0) - the membrane proton channel. CF(1) has five subunits: alpha(3), beta(3), gamma(1), delta(1), epsilon(1). CF(0) has three main subunits: a(1), b(2) and c(9-12). The alpha and beta chains form an alternating ring which encloses part of the gamma chain. CF(1) is attached to CF(0) by a central stalk formed by the gamma and epsilon chains, while a peripheral stalk is formed by the delta and b chains.

The protein resides in the cell membrane. It catalyses the reaction ATP + H2O + 4 H(+)(in) = ADP + phosphate + 5 H(+)(out). Produces ATP from ADP in the presence of a proton gradient across the membrane. The alpha chain is a regulatory subunit. In Listeria welshimeri serovar 6b (strain ATCC 35897 / DSM 20650 / CCUG 15529 / CIP 8149 / NCTC 11857 / SLCC 5334 / V8), this protein is ATP synthase subunit alpha 2.